The sequence spans 201 residues: Peptidyl-prolyl cis-trans isomerase CYP19-4 (201 aa).

An N-terminal signal peptide occupies residues 1 to 23 (MAKASFILLGTLFLFGAIASIQA). Positions 35–198 (YFDVEIDGKS…SKVVIADSGE (164 aa)) constitute a PPIase cyclophilin-type domain.

The protein belongs to the cyclophilin-type PPIase family. As to quaternary structure, interacts with EMB30/GNOM. As to expression, ubiquitous, mostly in aerial organs (at protein level).

The protein resides in the cytoplasm. The protein localises to the membrane. It localises to the endoplasmic reticulum. Its subcellular location is the secreted. It carries out the reaction [protein]-peptidylproline (omega=180) = [protein]-peptidylproline (omega=0). Its activity is regulated as follows. Binds cyclosporin A (CsA). CsA mediates some of its effects via an inhibitory action on PPIase. PPIases accelerate the folding of proteins. It catalyzes the cis-trans isomerization of proline imidic peptide bonds in oligopeptides. May be involved during embryogenesis and organ development by regulating the folding of EMB30/GNOM, and thus, by modulating its activity. The polypeptide is Peptidyl-prolyl cis-trans isomerase CYP19-4 (CYP19-4) (Arabidopsis thaliana (Mouse-ear cress)).